Here is a 979-residue protein sequence, read N- to C-terminus: Receptor-type tyrosine-protein phosphatase-like N (979 aa).

Residues 1–34 (MRRPRRPGGLGGSGGLRLLLCLLLLSSRPGGCSA) form the signal peptide. The tract at residues 35–131 (VSAHGCLFDR…RPRDRSGLAP (97 aa)) is RESP18 homology domain. Residues 35–575 (VSAHGCLFDR…QTAHSTSPMR (541 aa)) lie on the Lumenal side of the membrane. An intrachain disulfide couples Cys53 to Cys62. Basic and acidic residues-rich tracts occupy residues 112 to 127 (RIPR…RDRS) and 304 to 323 (RAED…RGEK). Disordered stretches follow at residues 112–173 (RIPR…SSSL), 289–329 (SRAR…SPAV), and 393–439 (VEGR…ARPP). The residue at position 308 (Ser308) is a Phosphoserine. The segment covering 415 to 433 (SPTSSEVQQVPSPVSSEPP) has biased composition (low complexity). Thr441 carries O-linked (GalNAc...) threonine glycosylation. The tract at residues 449 to 575 (SPLGQSQPTV…QTAHSTSPMR (127 aa)) is sufficient for dimerization of proICA512. Asn506 and Asn524 each carry an N-linked (GlcNAc...) asparagine glycan. Residues 576–600 (SVLLTLVALAGVAGLLVALAVALCV) traverse the membrane as a helical segment. The sufficient for dimerization of proICA512 stretch occupies residues 601 to 732 (RQHARQQDKE…PNTCATAQGE (132 aa)). Topologically, residues 601–979 (RQHARQQDKE…VNAILKALPQ (379 aa)) are cytoplasmic. The interval 643-680 (NRAEGPPEPSRVSSVSSQFSDAAQASPSSHSSTPSWCE) is disordered. Positions 652–677 (SRVSSVSSQFSDAAQASPSSHSSTPS) are enriched in low complexity. Positions 709-969 (LAKEWQALCA…EFALTAVAEE (261 aa)) constitute a Tyrosine-protein phosphatase domain. A Glycyl lysine isopeptide (Lys-Gly) (interchain with G-Cter in SUMO) cross-link involves residue Lys754.

The protein belongs to the protein-tyrosine phosphatase family. Receptor class 8 subfamily. As to quaternary structure, homodimer; shown for the unprocessed protein (proICA512) in the endoplasmic reticulum and resolved during protein maturation as ICA512-TMF seems to be predominantly monomeric in secretory granules; however, ICA512-CCF interacts with ICA512-TMF disrupting the ICA512-TMF:SNTB2 complex. The isolated lumenal RESP18 homology domain has been shown to form disulfide-linked homooligomers. Interacts (via cytoplasmic domain) with phosphorylated SNTB2; this protects PTPRN against cleavage by CAPN1 to produce ICA512-CCF. Dephosphorylation of SNTB2 upon insulin stimulation disrupts the interaction and results in PTPRN cleavage. Interacts with SNX19. ICA512-CCF interacts with PIAS4; in the nucleus. Interacts with STAT5B (phosphorylated); down-regulated by ICA512-CCF sumoylation; ICA512-CCF prevents STAT5B dephosphorylation; ICA512-CCF mediates interaction of STAT5B with PIAS4. Interacts (via RESP18 homology domain) with insulin and proinsulin. Interacts with PTPRN2, PTPRA and PTPRE. N-glycosylated. In terms of processing, O-glycosylated with core 1 or possibly core 8 glycans. Post-translationally, subject to proteolytic cleavage at multiple sites. Subject to cleavage on a pair of basic residues. On exocytosis of secretory granules in pancreatic beta-cells ICA512-TMF is transiently inserted in the plasma-membrane and cleaved by mu-type calpain CPN1 to yield ICA512-CCF. Sumoylated at two sites including Lys-754. Sumoylation decreases interaction with STAT5. Expression is restricted to neuroendocrine cells. Found in pancreas, brain and pituitary.

The protein localises to the membrane. It is found in the cytoplasmic vesicle. Its subcellular location is the secretory vesicle membrane. The protein resides in the perikaryon. It localises to the cell projection. The protein localises to the axon. It is found in the synapse. Its subcellular location is the cell membrane. The protein resides in the endosome. It localises to the nucleus. In terms of biological role, plays a role in vesicle-mediated secretory processes. Required for normal accumulation of secretory vesicles in hippocampus, pituitary and pancreatic islets. Required for the accumulation of normal levels of insulin-containing vesicles and preventing their degradation. Plays a role in insulin secretion in response to glucose stimuli. Required for normal accumulation of the neurotransmitters norepinephrine, dopamine and serotonin in the brain. In females, but not in males, required for normal accumulation and secretion of pituitary hormones, such as luteinizing hormone (LH) and follicle-stimulating hormone (FSH). Required to maintain normal levels of renin expression and renin release. Seems to lack intrinsic enzyme activity. May regulate catalytic active protein-tyrosine phosphatases such as PTPRA through dimerization. ICA512-TMF regulates dynamics and exocytosis of insulin secretory granules (SGs); binding of ICA512-TMF to SNTB2/beta-2-syntrophin is proposed to restrain SGs mobility and exocytosis by tethering them to the actin cytoskeleton depending on UTRN; the function is inhibited by cytoplasmic ICA512-CFF dimerizing with ICA512-TMF and displacing SNTB2. Functionally, ICA512-CCF translocated to the nucleus promotes expression of insulin and other granule-related genes; the function implicates binding to and regulating activity of STAT5B probably by preventing its dephosphorylation and potentially by inducing its sumoylation by recruiting PIAS4. Enhances pancreatic beta-cell proliferation by converging with signaling by STAT5B and STAT3. ICA512-CCF located in the cytoplasm regulates dynamics and exocytosis of insulin secretory granules (SGs) by dimerizing with ICA512-TMF and displacing SNTB2 thus enhancing SGs mobility and exocytosis. The chain is Receptor-type tyrosine-protein phosphatase-like N (PTPRN) from Homo sapiens (Human).